A 320-amino-acid polypeptide reads, in one-letter code: Short-chain dehydrogenase TIC 32 A, chloroplastic (320 aa).

NADP(+)-binding positions include 40-46 (GGTSGIG), 92-93 (DL), asparagine 119, and threonine 140. Serine 174 serves as a coordination point for substrate. Tyrosine 196 serves as the catalytic Proton acceptor. Residues 301–317 (DTTLADKLWDFSIKLVE) form an interaction with calmodulin region.

Belongs to the short-chain dehydrogenases/reductases (SDR) family. Part of the Tic complex. Expressed in the dehiscence zone of developing pods.

Its subcellular location is the plastid. It localises to the chloroplast inner membrane. Functionally, involved in protein precursor import into chloroplasts. Maybe involved in pod abscission or dehiscence (pod shatter). The chain is Short-chain dehydrogenase TIC 32 A, chloroplastic from Brassica napus (Rape).